The sequence spans 114 residues: Ig heavy chain V region (114 aa).

The region spanning Glu-1–Asp-106 is the Ig-like domain.

In Mus musculus (Mouse), this protein is Ig heavy chain V region.